The sequence spans 322 residues: Fructose-1,6-bisphosphatase class 1 (322 aa).

Mg(2+)-binding residues include glutamate 84, aspartate 103, leucine 105, and aspartate 106. Residues 106–109 (DGSS), asparagine 198, and lysine 264 contribute to the substrate site. Residue glutamate 270 participates in Mg(2+) binding.

The protein belongs to the FBPase class 1 family. As to quaternary structure, homotetramer. Mg(2+) is required as a cofactor.

It is found in the cytoplasm. It catalyses the reaction beta-D-fructose 1,6-bisphosphate + H2O = beta-D-fructose 6-phosphate + phosphate. Its pathway is carbohydrate biosynthesis; gluconeogenesis. This chain is Fructose-1,6-bisphosphatase class 1, found in Saccharophagus degradans (strain 2-40 / ATCC 43961 / DSM 17024).